The primary structure comprises 65 residues: Large ribosomal subunit protein bL35 (65 aa).

The disordered stretch occupies residues 1–26 (MPKMKTHRGAAKRFRKTGTGKLKRGK).

The protein belongs to the bacterial ribosomal protein bL35 family.

The chain is Large ribosomal subunit protein bL35 from Clostridium beijerinckii (strain ATCC 51743 / NCIMB 8052) (Clostridium acetobutylicum).